We begin with the raw amino-acid sequence, 156 residues long: Cell division protein SepF (156 aa).

A disordered region spans residues 30–49; sequence NAAAPSTTETSVVRQDDRPK.

It belongs to the SepF family. As to quaternary structure, homodimer. Interacts with FtsZ.

It localises to the cytoplasm. Functionally, cell division protein that is part of the divisome complex and is recruited early to the Z-ring. Probably stimulates Z-ring formation, perhaps through the cross-linking of FtsZ protofilaments. Its function overlaps with FtsA. The protein is Cell division protein SepF of Exiguobacterium sp. (strain ATCC BAA-1283 / AT1b).